A 474-amino-acid chain; its full sequence is ATP synthase subunit beta 2 (474 aa).

Residue 156–163 (GGAGVGKT) coordinates ATP.

It belongs to the ATPase alpha/beta chains family. F-type ATPases have 2 components, CF(1) - the catalytic core - and CF(0) - the membrane proton channel. CF(1) has five subunits: alpha(3), beta(3), gamma(1), delta(1), epsilon(1). CF(0) has three main subunits: a(1), b(2) and c(9-12). The alpha and beta chains form an alternating ring which encloses part of the gamma chain. CF(1) is attached to CF(0) by a central stalk formed by the gamma and epsilon chains, while a peripheral stalk is formed by the delta and b chains.

It localises to the cell inner membrane. It carries out the reaction ATP + H2O + 4 H(+)(in) = ADP + phosphate + 5 H(+)(out). Its function is as follows. Produces ATP from ADP in the presence of a proton gradient across the membrane. The catalytic sites are hosted primarily by the beta subunits. This is ATP synthase subunit beta 2 from Shewanella frigidimarina (strain NCIMB 400).